A 575-amino-acid chain; its full sequence is Serine/threonine-protein kinase YPK1 (575 aa).

Residues 1–53 (MMSWKFGKKFKEGGFLSGKHHSSNNNSPSDTSRSTTPTPGNPHPEDAVKPPVP) form a disordered region. The segment covering 23 to 38 (SNNNSPSDTSRSTTPT) has biased composition (low complexity). The region spanning 245–500 (FELLKVIGKG…AQDIKNHPFF (256 aa)) is the Protein kinase domain. Residues 251–259 (IGKGSFGKV) and Lys274 contribute to the ATP site. Residue Asp368 is the Proton acceptor of the active site. In terms of domain architecture, AGC-kinase C-terminal spans 502 to 573 (KHINFTKLWN…SVSPLGESVG (72 aa)). A phosphoserine mark is found at Ser543 and Ser562.

Belongs to the protein kinase superfamily. AGC Ser/Thr protein kinase family. RAC subfamily.

It catalyses the reaction L-seryl-[protein] + ATP = O-phospho-L-seryl-[protein] + ADP + H(+). It carries out the reaction L-threonyl-[protein] + ATP = O-phospho-L-threonyl-[protein] + ADP + H(+). Probable serine/threonine-protein kinase which may act in the sphingolipid-mediated signaling pathway. May act downstream of TORC2 (TOR complex 2) and PDK1 to regulate sphingolipid metabolism. This chain is Serine/threonine-protein kinase YPK1, found in Cryptococcus neoformans var. grubii serotype A (strain H99 / ATCC 208821 / CBS 10515 / FGSC 9487) (Filobasidiella neoformans var. grubii).